We begin with the raw amino-acid sequence, 730 residues long: uncharacterized protein (730 aa).

Phosphoserine occurs at positions 82 and 89. 2 disordered regions span residues 82 to 114 and 447 to 468; these read SPVR…TGSY and NTNH…SKNE. The span at 89-98 shows a compositional bias: polar residues; the sequence is SIQPSNSGKN. A compositionally biased stretch (low complexity) spans 449–460; sequence NHNFTTNNNNEN. Residues Ser-483 and Ser-651 each carry the phosphoserine modification.

This is an uncharacterized protein from Saccharomyces cerevisiae (strain ATCC 204508 / S288c) (Baker's yeast).